The sequence spans 569 residues: Lysine--tRNA ligase (569 aa).

Mg(2+) contacts are provided by Glu414 and Glu421.

The protein belongs to the class-II aminoacyl-tRNA synthetase family. As to quaternary structure, homodimer. The cofactor is Mg(2+).

Its subcellular location is the cytoplasm. The enzyme catalyses tRNA(Lys) + L-lysine + ATP = L-lysyl-tRNA(Lys) + AMP + diphosphate. The polypeptide is Lysine--tRNA ligase (Christiangramia forsetii (strain DSM 17595 / CGMCC 1.15422 / KT0803) (Gramella forsetii)).